The following is a 695-amino-acid chain: ATP-dependent DNA helicase II subunit 2 (695 aa).

Residues 229–461 (FSIGNRDSKD…IDFAVSNYID (233 aa)) enclose the Ku domain.

Belongs to the ku80 family. In terms of assembly, heterodimer of pku70 and pku80.

It is found in the nucleus. Its subcellular location is the chromosome. It localises to the telomere. The enzyme catalyses ATP + H2O = ADP + phosphate + H(+). Single-stranded DNA-dependent ATP-dependent helicase. Involved in non-homologous end joining (NHEJ) DNA double strand break repair. DNA-binding is sequence-independent but has a high affinity to nicks in double-stranded DNA and to the ends of duplex DNA. Binds to naturally occurring chromosomal ends, and therefore provides chromosomal end protection. Required also for telomere recombination to repair telomeric ends in the absence of telomerase. ku70, of the ku70/ku80 heterodimer, binds to the stem loop of tlc1, the RNA component of telomerase. Involved in telomere maintenance. Interacts with telomeric repeats and subtelomeric sequences thereby controlling telomere length and protecting against subtelomeric rearrangement. Required for mating-type switching. The polypeptide is ATP-dependent DNA helicase II subunit 2 (pku80) (Schizosaccharomyces pombe (strain 972 / ATCC 24843) (Fission yeast)).